The chain runs to 147 residues: Large ribosomal subunit protein bL9 (147 aa).

This sequence belongs to the bacterial ribosomal protein bL9 family.

Its function is as follows. Binds to the 23S rRNA. In Halalkalibacterium halodurans (strain ATCC BAA-125 / DSM 18197 / FERM 7344 / JCM 9153 / C-125) (Bacillus halodurans), this protein is Large ribosomal subunit protein bL9.